The sequence spans 602 residues: Aspartate--tRNA(Asp/Asn) ligase (602 aa).

E170 is a binding site for L-aspartate. The interval 194–197 (QLFK) is aspartate. R216 is a binding site for L-aspartate. ATP contacts are provided by residues 216 to 218 (RDE) and Q225. H448 serves as a coordination point for L-aspartate. E482 serves as a coordination point for ATP. R489 serves as a coordination point for L-aspartate. Residue 534 to 537 (GWDR) participates in ATP binding. Positions 559–602 (GGVDPLTDAPAPISAQQRKESGIDAKPEKKSEDKKSEGDTAEAK) are disordered. The span at 575–602 (QRKESGIDAKPEKKSEDKKSEGDTAEAK) shows a compositional bias: basic and acidic residues.

Belongs to the class-II aminoacyl-tRNA synthetase family. Type 1 subfamily. In terms of assembly, homodimer.

Its subcellular location is the cytoplasm. It catalyses the reaction tRNA(Asx) + L-aspartate + ATP = L-aspartyl-tRNA(Asx) + AMP + diphosphate. Its function is as follows. Aspartyl-tRNA synthetase with relaxed tRNA specificity since it is able to aspartylate not only its cognate tRNA(Asp) but also tRNA(Asn). Reaction proceeds in two steps: L-aspartate is first activated by ATP to form Asp-AMP and then transferred to the acceptor end of tRNA(Asp/Asn). This Rhodococcus erythropolis (strain PR4 / NBRC 100887) protein is Aspartate--tRNA(Asp/Asn) ligase.